The following is a 634-amino-acid chain: Sodium-dependent neutral amino acid transporter B(0)AT1 (634 aa).

Residues 1–41 (MVRLVLPNPGLDTRILSLAELETIEQEEASSRPKWDNKAQY) are Cytoplasmic-facing. S17 is modified (phosphoserine). The chain crosses the membrane as a helical span at residues 42–62 (LLTCVGFCVGLGNVWRFPYLC). At 63 to 65 (QSH) the chain is on the extracellular side. A helical membrane pass occupies residues 66–86 (GGGAFMIPFLILLVLEGIPLL). At 87–120 (HLEFAIGQRLRRGSLGVWSSIHPALKGVGLTSML) the chain is on the cytoplasmic side. A helical membrane pass occupies residues 121-141 (VSFVVGLYYNTIISWIMWYLF). The Extracellular segment spans residues 142–192 (NSFQEPLPWSECPLNENQTGYVDECARSSPVDYFWYRETLNISTSISDSGS). Residues N158 and N182 are each glycosylated (N-linked (GlcNAc...) asparagine). Residues 193 to 213 (IQWRMLLCLACAWSVLYMCTI) traverse the membrane as a helical segment. Topologically, residues 214-221 (RGIETTGK) are cytoplasmic. A helical transmembrane segment spans residues 222 to 242 (VVYITSTLPYVVLTIFLIRGL). Residues 243–268 (TLKGATKGIIYLFTPNVTELANPVTW) are Extracellular-facing. N-linked (GlcNAc...) asparagine glycosylation occurs at N258. A helical transmembrane segment spans residues 269-289 (LDAGAQVFFSFSLAFGGLISF). Over 290–304 (SSYNSVHNNCERDSV) the chain is Cytoplasmic. A helical membrane pass occupies residues 305–325 (IVSIINGFTSVYVAIVIYSII). The Extracellular segment spans residues 326–413 (GFRATQRYDD…TEAITKMPVS (88 aa)). N354 and N368 each carry an N-linked (GlcNAc...) asparagine glycan. A helical membrane pass occupies residues 414 to 434 (PLWSVLFFIMLFCLGLSSMFG). At 435-456 (NMEGVVVPLQDLKVIPPKWPKE) the chain is on the cytoplasmic side. A helical transmembrane segment spans residues 457–477 (LLTGLICLGTFLIGFIFTLNS). At 478–487 (GQYWLSLLDS) the chain is on the extracellular side. A helical membrane pass occupies residues 488-508 (YAVSIPLLIIAFCEMFSVVYV). The Cytoplasmic segment spans residues 509-531 (YGVDRFNKDIEFMIGHKPNIFWQ). Residues 532–552 (VTWRVVSPLLMLIILVFFFVV) traverse the membrane as a helical segment. At 553-581 (QVSQELTYSIWNPGYEEFPKSQKISHPNW) the chain is on the extracellular side. Residues 582-602 (VYAVVVIVAGVPSLTIPSYAI) form a helical membrane-spanning segment. Residues 603–634 (YKLIRNCCQKPGDRQGLVSTLSTASMNGDLKY) are Cytoplasmic-facing. S627 bears the Phosphoserine mark.

Belongs to the sodium:neurotransmitter symporter (SNF) (TC 2.A.22) family. SLC6A19 subfamily. As to quaternary structure, interacts in a tissue-specific manner with ACE2 in small intestine and with CLTRN in the kidney. Interacts with CLTRN; this interaction is required for trafficking of SLC6A19 to the plasma membrane and for its catalytic activation in kidneys. Interacts with ACE2; this interaction is required for trafficking of SLC6A19 to the plasma membrane and for its catalytic activation in intestine. Interacts with ANPEP; the interaction positively regulates its amino acid transporter activity.

Its subcellular location is the membrane. It catalyses the reaction L-alanine(in) + Na(+)(in) = L-alanine(out) + Na(+)(out). It carries out the reaction L-cysteine(in) + Na(+)(in) = L-cysteine(out) + Na(+)(out). The enzyme catalyses L-glutamine(in) + Na(+)(in) = L-glutamine(out) + Na(+)(out). The catalysed reaction is glycine(in) + Na(+)(in) = glycine(out) + Na(+)(out). It catalyses the reaction L-isoleucine(in) + Na(+)(in) = L-isoleucine(out) + Na(+)(out). It carries out the reaction L-leucine(in) + Na(+)(in) = L-leucine(out) + Na(+)(out). The enzyme catalyses L-methionine(in) + Na(+)(in) = L-methionine(out) + Na(+)(out). The catalysed reaction is L-phenylalanine(in) + Na(+)(in) = L-phenylalanine(out) + Na(+)(out). It catalyses the reaction L-serine(in) + Na(+)(in) = L-serine(out) + Na(+)(out). It carries out the reaction L-tryptophan(in) + Na(+)(in) = L-tryptophan(out) + Na(+)(out). The enzyme catalyses L-tyrosine(in) + Na(+)(in) = L-tyrosine(out) + Na(+)(out). The catalysed reaction is L-valine(in) + Na(+)(in) = L-valine(out) + Na(+)(out). Its function is as follows. Transporter that mediates resorption of neutral amino acids across the apical membrane of renal and intestinal epithelial cells. This uptake is sodium-dependent and chloride-independent. Requires CLTRN in kidney or ACE2 in intestine for cell surface expression and amino acid transporter activity. The sequence is that of Sodium-dependent neutral amino acid transporter B(0)AT1 (SLC6A19) from Pongo abelii (Sumatran orangutan).